A 2131-amino-acid chain; its full sequence is Nonribosomal peptide synthetase criC (2131 aa).

Residues Phe-13–Arg-407 are adenylation 1. One can recognise a Carrier 1 domain in the interval Ser-525 to Thr-601. Ser-562 bears the O-(pantetheine 4'-phosphoryl)serine mark. The disordered stretch occupies residues Arg-598–Thr-627. Residues Pro-625–Asp-1018 are condensation 1. An adenylation 2 region spans residues Ala-1069–Arg-1447. Residues Ser-1569–Gln-1647 enclose the Carrier 2 domain. The residue at position 1607 (Ser-1607) is an O-(pantetheine 4'-phosphoryl)serine. A condensation 2 region spans residues Ser-1688 to Met-2086.

This sequence belongs to the NRP synthetase family. The cofactor is pantetheine 4'-phosphate.

It carries out the reaction L-tryptophan + L-alanine + 2 ATP = cyclo(L-tryptophyl-L-alanyl) + 2 ADP + 2 phosphate + 2 H(+). Its pathway is secondary metabolite biosynthesis. The protein operates within alkaloid biosynthesis. Its function is as follows. Nonribosomal peptide synthetase; part of the gene cluster that mediates the biosynthesis of echinulin family alkaloid. The pathway begins with the biosynthesis of the cyclic dipeptide cyclo-L-Trp-L-Ala (cyclo-TA) by the NRPS criC via condensation of L-alanine and L-tryptophan. The prenyltransferase criA then catalyzes the first prenylation step, a reverse prenylation reaction at C2, to yield preechinulin. Preechinulin is the substrate of the cytochrome P450 monooxygenase criE that catalyzes the formation of the double bond between C10 and C11 to produce neoechulin A. The unique prenyltransferase criF functions as a competitive enzyme with criE for preechinulin metabolization and uses preechinulin for effective regiospecific prenylations. Preechinulin is prenylated by criF at C5 or C7. C7-prenylation leads to accumulation of tardioxopiperazine B without further modification by criF. In contrast, the C5-prenylated tardioxopiperazine A can be prenylated again by criF, predominantly at C7 to form echinulin or less frequently at C4 to give variecolorin L. CriF also accepts neoechilunin A to produce varlecolorin G (prenylation at C5) or isoechinulin A (prenylation at C7). CriF further converts isoechinulin A into dehydroechinulin. Moreover, a yet unidentified enzyme can also convert neoechilunin A into neoechilunin B by introducing a double bond between positions C14 and C17 and thus provides a further substrate to criF for C5 and C7 prenylation. The polypeptide is Nonribosomal peptide synthetase criC (Aspergillus cristatus (Chinese Fuzhuan brick tea-fermentation fungus)).